We begin with the raw amino-acid sequence, 2144 residues long: Insulin-like receptor (2144 aa).

The N-terminal stretch at 1–43 (MFNMPRGVTKSKSKRGKIKMENDMAAAATTTACTLGHICVLCR) is a signal peptide. Asn-74 carries an N-linked (GlcNAc...) asparagine glycan. A compositionally biased stretch (basic residues) spans 174-199 (RRQHQQQHHHHYQHHHQQHHQQHHQR). The disordered stretch occupies residues 174–200 (RRQHQQQHHHHYQHHHQQHHQQHHQRQ). Asn-203 is a glycosylation site (N-linked (GlcNAc...) asparagine). A disordered region spans residues 229–256 (NYKQQQQLQHNQQLPRATPQQKQQEKDR). Residues 232 to 242 (QQQQLQHNQQL) are compositionally biased toward low complexity. N-linked (GlcNAc...) asparagine glycosylation is found at Asn-265, Asn-356, Asn-376, Asn-406, Asn-468, and Asn-509. Intrachain disulfides connect Cys-531–Cys-539, Cys-535–Cys-545, Cys-546–Cys-554, Cys-550–Cys-564, Cys-567–Cys-576, Cys-580–Cys-591, Cys-597–Cys-618, and Cys-635–Cys-638. The FU repeat unit spans residues 542–586 (EHTCCSQDCLGGCVIDKNGNESCISCRNVSFNNICMDSCPKGYYQ). Asn-561 and Asn-569 each carry an N-linked (GlcNAc...) asparagine glycan. Residues Asn-751, Asn-810, Asn-824, Asn-839, Asn-864, Asn-898, Asn-946, Asn-1053, Asn-1147, Asn-1218, and Asn-1265 are each glycosylated (N-linked (GlcNAc...) asparagine). 2 Fibronectin type-III domains span residues 825–927 (VTTK…TNPG) and 928–1026 (RPSK…EYDD). Residues 1053 to 1084 (NGSSDKSDGAEGAALDSNAIPNGGATNPSRRR) form a disordered region. The region spanning 1210-1305 (LKVDLEHANN…EVEHIKVEPP (96 aa)) is the Fibronectin type-III 3 domain. The helical transmembrane segment at 1311–1331 (VFFWLLGIGLAFLIVSLFGYV) threads the bilayer. Over 1332 to 2144 (CYLHKRKVPS…PPNGFIGREA (813 aa)) the chain is Cytoplasmic. Positions 1351-1354 (NPFY) are chico-binding. Tyr-1354 carries the post-translational modification Phosphotyrosine; by autocatalysis. A Protein kinase domain is found at 1371–1659 (IIQLAPLGQG…LEPQCPNSQF (289 aa)). Residues 1377 to 1385 (LGQGSFGMV) and Lys-1405 contribute to the ATP site. Asp-1519 functions as the Proton acceptor in the catalytic mechanism. 3 positions are modified to phosphotyrosine; by autocatalysis: Tyr-1545, Tyr-1549, and Tyr-1550. Disordered stretches follow at residues 1690–1724 (VPLDQDLQDREQQEDATTPLRMGDYQQNSSLDQPP), 1788–1871 (RGYE…KKTV), 1886–1962 (LFNH…ISDN), and 2020–2144 (ISHN…GREA). Phosphoserine is present on Ser-1816. Composition is skewed to low complexity over residues 1849-1860 (STASAGSSNASS) and 1894-1916 (SNASHKSNASNAPSTSSNTNLTS). Residues 2042-2062 (SDEDNEQEEDDEDEDDDVDDE) are compositionally biased toward acidic residues. Over residues 2063 to 2073 (HVEHIKMERMP) the composition is skewed to basic and acidic residues. The span at 2084-2120 (SKTQPPRSRSVSQTRKSPTNPNSGIGATGAGNRSNLL) shows a compositional bias: polar residues.

It belongs to the protein kinase superfamily. Tyr protein kinase family. Insulin receptor subfamily. As to quaternary structure, tetramer of 2 alpha and 2 beta chains linked by disulfide bonds. The alpha chains contribute to the formation of the ligand-binding domain, while the beta chains carry the kinase domain. Interacts (via C-terminal cytoplasmic region) with dock/dreadlocks (via SH2 and SH3 domains); when autophosphorylated. May interact (via beta subunit) with chico/IRS-1; this interaction may lead to tyrosine phosphorylation of the insulin receptor substrate chico. Interacts with Elp6; the interaction may stabilize Elp6. Requires Mn(2+) as cofactor. Post-translationally, the 280 kDa proreceptor is proteolytically processed to form a 120 kDa alpha subunit and a 170 kDa beta subunit. The beta subunit undergoes cell-specific cleavage to generate a 90 kDa beta subunit and a free 60 kDa C-terminal subunit. Both the 90 kDa and the 170 kDa beta subunits can assemble with the alpha subunits to form mature receptors. In terms of processing, autophosphorylated on tyrosine residues, including Tyr-1549 and Tyr-1550, in response to exogenous insulin. Tyr-1549 and Tyr-1550 are dephosphorylated by Ptp61F recruited by the dock/dreadlocks adapter protein. Phosphorylation of Tyr-1354 is required for Chico-binding.

Its subcellular location is the membrane. The protein resides in the cell projection. The protein localises to the axon. It is found in the growth cone membrane. It catalyses the reaction L-tyrosyl-[protein] + ATP = O-phospho-L-tyrosyl-[protein] + ADP + H(+). Activated in response to insulin. Autophosphorylation activates the kinase activity. Has a ligand-stimulated tyrosine-protein kinase activity. Binds 3 insulin-like peptide ligands. Regulates cell number and cell size during development by regulating cell growth and survival, affecting body size and organ size, including ovaries and imaginal disks. Plays a role in life-span determination. May be involved in regulation of other neuroendocrine signaling pathways. Involved in the development of the embryonic nervous system. Functions upstream of dock/dreadlocks for photoreceptor (R cell) axon guidance and targeting in the visual system. Involved in the acs mediated recovery of gut enterocytes following the cytoplasmic purge response to intestinal bacterial infection. This Drosophila melanogaster (Fruit fly) protein is Insulin-like receptor.